The primary structure comprises 260 residues: Adenosylcobinamide-GDP ribazoletransferase (260 aa).

7 helical membrane-spanning segments follow: residues 42–62 (PLAG…ANAI), 64–84 (LPPL…TGAL), 117–137 (FAAL…MAII), 144–164 (YALL…LAFW), 192–212 (GLGL…VALI), 214–234 (ALVL…AKIG), and 240–260 (TLGA…VMAL).

This sequence belongs to the CobS family. It depends on Mg(2+) as a cofactor.

The protein resides in the cell inner membrane. The catalysed reaction is alpha-ribazole + adenosylcob(III)inamide-GDP = adenosylcob(III)alamin + GMP + H(+). It catalyses the reaction alpha-ribazole 5'-phosphate + adenosylcob(III)inamide-GDP = adenosylcob(III)alamin 5'-phosphate + GMP + H(+). The protein operates within cofactor biosynthesis; adenosylcobalamin biosynthesis; adenosylcobalamin from cob(II)yrinate a,c-diamide: step 7/7. Its function is as follows. Joins adenosylcobinamide-GDP and alpha-ribazole to generate adenosylcobalamin (Ado-cobalamin). Also synthesizes adenosylcobalamin 5'-phosphate from adenosylcobinamide-GDP and alpha-ribazole 5'-phosphate. The protein is Adenosylcobinamide-GDP ribazoletransferase of Brucella melitensis biotype 1 (strain ATCC 23456 / CCUG 17765 / NCTC 10094 / 16M).